The sequence spans 25 residues: Ribosome-inactivating protein charantin (25 aa).

Monomer.

It carries out the reaction Endohydrolysis of the N-glycosidic bond at one specific adenosine on the 28S rRNA.. In terms of biological role, inhibits cell-free translation in a rabbit reticulocyte lysate system. The chain is Ribosome-inactivating protein charantin from Momordica charantia (Bitter gourd).